The sequence spans 179 residues: Large ribosomal subunit protein uL6 (179 aa).

This sequence belongs to the universal ribosomal protein uL6 family. As to quaternary structure, part of the 50S ribosomal subunit.

Functionally, this protein binds to the 23S rRNA, and is important in its secondary structure. It is located near the subunit interface in the base of the L7/L12 stalk, and near the tRNA binding site of the peptidyltransferase center. This is Large ribosomal subunit protein uL6 from Synechococcus sp. (strain RCC307).